We begin with the raw amino-acid sequence, 289 residues long: Protease HtpX (289 aa).

Helical transmembrane passes span I4–I24 and L36–M56. A Zn(2+)-binding site is contributed by H143. E144 is a catalytic residue. H147 is a binding site for Zn(2+). 2 consecutive transmembrane segments (helical) span residues L158 to V178 and M192 to L212. E221 serves as a coordination point for Zn(2+).

This sequence belongs to the peptidase M48B family. Zn(2+) serves as cofactor.

The protein resides in the cell inner membrane. The sequence is that of Protease HtpX from Vibrio campbellii (strain ATCC BAA-1116).